Here is a 614-residue protein sequence, read N- to C-terminus: UPF0329 protein ECU03_0090 (614 aa).

2 stretches are compositionally biased toward basic and acidic residues: residues 317-338 (EREE…EESL) and 345-354 (LRMEEKEKSK). Positions 317–420 (EREEAEKMRG…KKSRSKGHRY (104 aa)) are disordered. The span at 355–364 (SRGKKKKGGK) shows a compositional bias: basic residues. Basic and acidic residues predominate over residues 372–381 (AKMEEEKKDS). Positions 382 to 394 (EEVEESAEAEVSL) are enriched in acidic residues. The span at 408–420 (SSKKKSRSKGHRY) shows a compositional bias: basic residues.

It belongs to the UPF0329 family.

This Encephalitozoon cuniculi (strain GB-M1) (Microsporidian parasite) protein is UPF0329 protein ECU03_0090.